The primary structure comprises 233 residues: Protein-methionine-sulfoxide reductase heme-binding subunit MsrQ (233 aa).

6 helical membrane-spanning segments follow: residues 13–33 (IKAA…HGLW), 44–64 (ALTR…LCVS), 81–101 (MLGL…LWLD), 117–137 (PFIT…LTSS), 151–171 (SLHR…LWLV), and 174–194 (VALL…GWRV). Residues 50 to 164 (GIWTLNFLFL…AVYAVAILGV (115 aa)) enclose the Ferric oxidoreductase domain.

This sequence belongs to the MsrQ family. In terms of assembly, heterodimer of a catalytic subunit (MsrP) and a heme-binding subunit (MsrQ).

The protein resides in the cell inner membrane. Functionally, part of the MsrPQ system that repairs oxidized periplasmic proteins containing methionine sulfoxide residues (Met-O), using respiratory chain electrons. Thus protects these proteins from oxidative-stress damage caused by reactive species of oxygen and chlorine generated by the host defense mechanisms. MsrPQ is essential for the maintenance of envelope integrity under bleach stress, rescuing a wide series of structurally unrelated periplasmic proteins from methionine oxidation. MsrQ provides electrons for reduction to the reductase catalytic subunit MsrP, using the quinone pool of the respiratory chain. Probably involved in protection against reactive chlorine species (RCS) generated by chlorite and hypochlorite. The chain is Protein-methionine-sulfoxide reductase heme-binding subunit MsrQ from Azospira oryzae (strain ATCC BAA-33 / DSM 13638 / PS) (Dechlorosoma suillum).